Here is a 434-residue protein sequence, read N- to C-terminus: KH domain-containing protein 3 (434 aa).

The segment at 1–39 is involved in RNA binding; the sequence is MATLKTFRTLVQLKHKLGKAYEIVGEPRLPKWFHVEYLE. The 79-residue stretch at 40 to 118 folds into the KH; atypical domain; it reads DPKKMYVEPT…CRMKLMEKEA (79 aa). A phosphothreonine mark is found at threonine 267 and threonine 279. Residues 334-434 form a required for interaction with NUMA1 and regulation of apoptosis in response to DNA damage region; the sequence is VREAATQQTP…RAVWEPFVML (101 aa).

This sequence belongs to the KHDC1 family. As to quaternary structure, component of the subcortical maternal complex (SCMC), at least composed of NLRP5, KHDC3, OOEP, and TLE6. Within the complex, interacts with NLRP5, KHDC3 and TLE6. The SCMC may facilitate translocation of its components between the nuclear and cytoplasmic compartments. Forms a scaffold complex with OOEP/FLOPED, and interacts with BLM and TRIM25 at DNA replication forks. Interacts with PARP1; the interaction is increased following the formation of DNA double-strand breaks. Interacts (via C-terminus) with NUMA1.

The protein resides in the cytoplasm. The protein localises to the cell cortex. Its subcellular location is the nucleus. It localises to the mitochondrion. It is found in the cytoskeleton. The protein resides in the microtubule organizing center. The protein localises to the centrosome. Its subcellular location is the chromosome. Functionally, component of the subcortical maternal complex (SCMC), a multiprotein complex that plays a key role in early embryonic development. The SCMC complex is a structural constituent of cytoplasmic lattices, which consist in fibrous structures found in the cytoplasm of oocytes and preimplantation embryos. They are required to store maternal proteins critical for embryonic development, such as proteins that control epigenetic reprogramming of the preimplantation embryo, and prevent their degradation or activation. KHDC3 ensures proper spindle assembly by regulating the localization of AURKA via RHOA signaling and of PLK1 via a RHOA-independent process. Required for the localization of MAD2L1 to kinetochores to enable spindle assembly checkpoint function. As part of the OOEP-KHDC3 scaffold, recruits BLM and TRIM25 to DNA replication forks, thereby promoting the ubiquitination of BLM by TRIM25, enhancing BLM retainment at replication forks and therefore promoting stalled replication fork restart. Regulates homologous recombination-mediated DNA repair via recruitment of RAD51 to sites of DNA double-strand breaks, and sustainment of PARP1 activity, which in turn modulates downstream ATM or ATR activation. Activation of ATM or ATR in response to DNA double-strand breaks may be cell-type specific. Its role in DNA double-strand break repair is independent of its role in restarting stalled replication forks. Promotes neural stem cell neurogenesis and neuronal differentiation in the hippocampus. May regulate normal development of learning, memory and anxiety. Capable of binding RNA. This chain is KH domain-containing protein 3, found in Rattus norvegicus (Rat).